We begin with the raw amino-acid sequence, 392 residues long: Pannexin-3 (392 aa).

Residues 1 to 39 lie on the Cytoplasmic side of the membrane; the sequence is MSLAHTAAEYMLSDALLPDRRGSRLKGLRLELPLDKMVK. The chain crosses the membrane as a helical span at residues 40–60; that stretch reads FVTVGFPLLLMSLAFAQEFSS. Topologically, residues 61-113 are extracellular; sequence GSPISCFSPSNFSVRQAVFVDSSCWDSLAHYKQDEAGQYTVKSLWPHKALPYS. Asparagine 71 carries N-linked (GlcNAc...) asparagine glycosylation. The helical transmembrane segment at 114–134 threads the bilayer; that stretch reads LLALAVAMYLPVLLWQYAAVP. Residues 135–215 lie on the Cytoplasmic side of the membrane; the sequence is ALSSDLLFII…VATYLLRNAL (81 aa). The helical transmembrane segment at 216-236 threads the bilayer; it reads LLLFTSATYLYLGHFHLDVFF. Topologically, residues 237 to 267 are extracellular; sequence QEEFSCSIKTGLLHEETHVPELITCRLTSLS. A helical membrane pass occupies residues 268–288; sequence VFQIVSVSSVAIYTVLVPVII. Over 289–392 the chain is Cytoplasmic; the sequence is YNLTRLCRWD…LTQHTYDEHP (104 aa).

Belongs to the pannexin family. In terms of assembly, homoheptameric. Skin.

It localises to the cell membrane. It is found in the cell junction. Its subcellular location is the gap junction. The protein localises to the endoplasmic reticulum membrane. The enzyme catalyses Ca(2+)(in) = Ca(2+)(out). It carries out the reaction ATP(in) = ATP(out). Functionally, regulator of osteoblast differentiation by functionning as a Ca(2+) channel in the endoplasmic reticulum which regulates calmodulin (CaM) pathways. Allows ATP release into the extracellular space and activation or purinergic receptors. The protein is Pannexin-3 (Panx3) of Rattus norvegicus (Rat).